Reading from the N-terminus, the 276-residue chain is Energy-coupling factor transporter ATP-binding protein EcfA1 (276 aa).

One can recognise an ABC transporter domain in the interval 2-237; that stretch reads IEIKNLKFKY…GSELVDLGLD (236 aa). 37-44 contacts ATP; it reads GHNGSGKS.

Belongs to the ABC transporter superfamily. Energy-coupling factor EcfA family. Forms a stable energy-coupling factor (ECF) transporter complex composed of 2 membrane-embedded substrate-binding proteins (S component), 2 ATP-binding proteins (A component) and 2 transmembrane proteins (T component).

The protein resides in the cell membrane. ATP-binding (A) component of a common energy-coupling factor (ECF) ABC-transporter complex. Unlike classic ABC transporters this ECF transporter provides the energy necessary to transport a number of different substrates. This is Energy-coupling factor transporter ATP-binding protein EcfA1 from Streptococcus thermophilus (strain ATCC BAA-491 / LMD-9).